A 261-amino-acid polypeptide reads, in one-letter code: 3-hydroxyacyl-CoA dehydrogenase type-2 (261 aa).

Residue alanine 2 is modified to N-acetylalanine. NAD(+)-binding residues include serine 20, leucine 22, and aspartate 41. Lysine 53 bears the N6-acetyllysine; alternate mark. Lysine 53 carries the post-translational modification N6-succinyllysine; alternate. Valine 65 provides a ligand contact to NAD(+). Residue lysine 69 is modified to N6-acetyllysine. Cysteine 91 is a binding site for NAD(+). An N6-acetyllysine mark is found at lysine 99 and lysine 105. Substrate is bound at residue serine 155. 4 residues coordinate NAD(+): tyrosine 168, lysine 172, phenylalanine 201, and threonine 203. Tyrosine 168 functions as the Proton acceptor in the catalytic mechanism. At lysine 212 the chain carries N6-acetyllysine; alternate. Lysine 212 carries the N6-succinyllysine; alternate modification.

Belongs to the short-chain dehydrogenases/reductases (SDR) family. Homotetramer. Component of mitochondrial ribonuclease P, a complex composed of TRMT10C/MRPP1, HSD17B10/MRPP2 and PRORP/MRPP3. Interacts with TRMT10C/MRPP1; forming the MRPP1-MRPP2 subcomplex of the mitochondrial ribonuclease P complex.

It localises to the mitochondrion. Its subcellular location is the mitochondrion matrix. The protein resides in the mitochondrion nucleoid. It carries out the reaction a (3S)-3-hydroxyacyl-CoA + NAD(+) = a 3-oxoacyl-CoA + NADH + H(+). The enzyme catalyses (2S,3S)-3-hydroxy-2-methylbutanoyl-CoA + NAD(+) = 2-methyl-3-oxobutanoyl-CoA + NADH + H(+). The catalysed reaction is testosterone + NAD(+) = androst-4-ene-3,17-dione + NADH + H(+). It catalyses the reaction 5alpha-androstane-3alpha,17beta-diol + NAD(+) = 17beta-hydroxy-5alpha-androstan-3-one + NADH + H(+). It carries out the reaction 17beta-estradiol + NAD(+) = estrone + NADH + H(+). The enzyme catalyses cholate + NAD(+) = 3alpha,12alpha-dihydroxy-7-oxo-5beta-cholanate + NADH + H(+). The catalysed reaction is (3S)-3-hydroxybutanoyl-CoA + NAD(+) = acetoacetyl-CoA + NADH + H(+). It catalyses the reaction (3S)-hydroxyoctanoyl-CoA + NAD(+) = 3-oxooctanoyl-CoA + NADH + H(+). It carries out the reaction (3S)-hydroxyhexadecanoyl-CoA + NAD(+) = 3-oxohexadecanoyl-CoA + NADH + H(+). The enzyme catalyses 17beta-hydroxy-5alpha-androstan-3-one + NAD(+) = 5alpha-androstan-3,17-dione + NADH + H(+). The catalysed reaction is 5alpha-pregnan-20beta-ol-3-one + NAD(+) = 5alpha-pregnane-3,20-dione + NADH + H(+). It catalyses the reaction 3alpha-hydroxy-5alpha-pregnan-20-one + NAD(+) = 5alpha-pregnane-3,20-dione + NADH + H(+). It carries out the reaction cortisone + NAD(+) = 17alpha-hydroxypregn-4-en-3,11,20-trione-21-al + NADH + H(+). The enzyme catalyses 11-dehydrocorticosterone + NAD(+) = pregn-4-ene-3,11,20,21-tetraone + NADH + H(+). The catalysed reaction is cortisol + NAD(+) = 11beta,17alpha-dihydroxypregn-4-ene-3,20,21-trione + NADH + H(+). It catalyses the reaction chenodeoxycholate + NAD(+) = 7-oxolithocholate + NADH + H(+). It carries out the reaction ursodeoxycholate + NAD(+) = 7-oxolithocholate + NADH + H(+). The enzyme catalyses 3beta,7beta-dihydroxy-5beta-cholan-24-oate + NAD(+) = 3beta-hydroxy-7-oxo-5beta-cholan-24-oate + NADH + H(+). It functions in the pathway amino-acid degradation; L-isoleucine degradation. Its pathway is lipid metabolism; fatty acid beta-oxidation. It participates in steroid metabolism. The protein operates within lipid metabolism; bile acid biosynthesis. Mitochondrial dehydrogenase involved in pathways of fatty acid, branched-chain amino acid and steroid metabolism. Acts as (S)-3-hydroxyacyl-CoA dehydrogenase in mitochondrial fatty acid beta-oxidation, a major degradation pathway of fatty acids. Catalyzes the third step in the beta-oxidation cycle, namely the reversible conversion of (S)-3-hydroxyacyl-CoA to 3-ketoacyl-CoA. Preferentially accepts straight medium- and short-chain acyl-CoA substrates with highest efficiency for (3S)-hydroxybutanoyl-CoA. Acts as 3-hydroxy-2-methylbutyryl-CoA dehydrogenase in branched-chain amino acid catabolic pathway. Catalyzes the oxidation of 3-hydroxy-2-methylbutanoyl-CoA into 2-methyl-3-oxobutanoyl-CoA, a step in isoleucine degradation pathway. Has hydroxysteroid dehydrogenase activity toward steroid hormones and bile acids. Catalyzes the oxidation of 3alpha-, 17beta-, 20beta- and 21-hydroxysteroids and 7alpha- and 7beta-hydroxy bile acids. Oxidizes allopregnanolone/brexanolone at the 3alpha-hydroxyl group, which is known to be critical for the activation of gamma-aminobutyric acid receptors (GABAARs) chloride channel. Has phospholipase C-like activity toward cardiolipin and its oxidized species. Likely oxidizes the 2'-hydroxyl in the head group of cardiolipin to form a ketone intermediate that undergoes nucleophilic attack by water and fragments into diacylglycerol, dihydroxyacetone and orthophosphate. Has higher affinity for cardiolipin with oxidized fatty acids and may degrade these species during the oxidative stress response to protect cells from apoptosis. By interacting with intracellular amyloid-beta, it may contribute to the neuronal dysfunction associated with Alzheimer disease (AD). Essential for structural and functional integrity of mitochondria. Functionally, in addition to mitochondrial dehydrogenase activity, moonlights as a component of mitochondrial ribonuclease P, a complex that cleaves tRNA molecules in their 5'-ends. Together with TRMT10C/MRPP1, forms a subcomplex of the mitochondrial ribonuclease P, named MRPP1-MRPP2 subcomplex, which displays functions that are independent of the ribonuclease P activity. The MRPP1-MRPP2 subcomplex catalyzes the formation of N(1)-methylguanine and N(1)-methyladenine at position 9 (m1G9 and m1A9, respectively) in tRNAs; HSD17B10/MRPP2 acting as a non-catalytic subunit. The MRPP1-MRPP2 subcomplex also acts as a tRNA maturation platform: following 5'-end cleavage by the mitochondrial ribonuclease P complex, the MRPP1-MRPP2 subcomplex enhances the efficiency of 3'-processing catalyzed by ELAC2, retains the tRNA product after ELAC2 processing and presents the nascent tRNA to the mitochondrial CCA tRNA nucleotidyltransferase TRNT1 enzyme. Associates with mitochondrial DNA complexes at the nucleoids to initiate RNA processing and ribosome assembly. This chain is 3-hydroxyacyl-CoA dehydrogenase type-2 (Hsd17b10), found in Rattus norvegicus (Rat).